The sequence spans 145 residues: Oocyte zinc finger protein XlCOF8.4I (145 aa).

Positions 1–25 (HKREADFCSKGNLTNPEISPVEHYP) are disordered. The C2H2-type zinc finger occupies 123 to 145 (LSCSECGKCFSTYHVLARHQKTH).

It belongs to the krueppel C2H2-type zinc-finger protein family.

The protein resides in the nucleus. Its function is as follows. May be involved in transcriptional regulation. The polypeptide is Oocyte zinc finger protein XlCOF8.4I (Xenopus laevis (African clawed frog)).